Consider the following 106-residue polypeptide: NADH dehydrogenase [ubiquinone] 1 alpha subcomplex subunit 8-B (106 aa).

S2 is modified (N-acetylserine). 2 CHCH domains span residues 26 to 67 (GMRC…LKDL) and 68 to 106 (HQKC…CPLK). Short sequence motifs (cx9C motif) lie at residues 29-39 (CMPENVAFLKC), 49-59 (CLDKGRDVTRC), and 71-81 (CQKEMDDYVGC). Intrachain disulfides connect C29/C59, C39/C49, C71/C103, and C81/C92. Residues 92–103 (CRKEQEAFEKVC) carry the Cx10C motif motif.

The protein belongs to the complex I NDUFA8 subunit family. In terms of assembly, complex I is composed of at least 49 different subunits.

Its subcellular location is the mitochondrion. The protein localises to the mitochondrion intermembrane space. Its function is as follows. Accessory subunit of the mitochondrial membrane respiratory chain NADH dehydrogenase (Complex I), that is believed not to be involved in catalysis. Complex I functions in the transfer of electrons from NADH to the respiratory chain. The immediate electron acceptor for the enzyme is believed to be ubiquinone. The chain is NADH dehydrogenase [ubiquinone] 1 alpha subcomplex subunit 8-B from Arabidopsis thaliana (Mouse-ear cress).